A 92-amino-acid polypeptide reads, in one-letter code: MTRSLKKNPFVANHLLKKIDKLNTKAEKEIIVTWSRASTIIPTMIGHTIAIHNGKEHLPIYITDSMVGHKLGEFAPTLNFRGHAKSDNRSRR.

The protein belongs to the universal ribosomal protein uS19 family.

It localises to the plastid. The protein localises to the chloroplast. In terms of biological role, protein S19 forms a complex with S13 that binds strongly to the 16S ribosomal RNA. This chain is Small ribosomal subunit protein uS19c, found in Nicotiana sylvestris (Wood tobacco).